A 317-amino-acid polypeptide reads, in one-letter code: 1-phosphatidylinositol phosphodiesterase (317 aa).

A signal peptide spans 1–22; the sequence is MYKNYLQRTLVLLLCFILYFFT. Residues 58-196 form the PI-PLC X-box domain; the sequence is LAALSIPGTH…LKDVRGKILL (139 aa). Catalysis depends on His67, which acts as the Proton acceptor. His115 acts as the Proton donor in catalysis.

In terms of assembly, monomer.

The protein localises to the secreted. The protein resides in the cytoplasm. The catalysed reaction is a 1,2-diacyl-sn-glycero-3-phospho-(1D-myo-inositol) = 1D-myo-inositol 1,2-cyclic phosphate + a 1,2-diacyl-sn-glycerol. Cleaves glycosylphosphatidylinositol (GPI) and phosphatidylinositol (PI) anchors but not PI phosphates. Important factor in pathogenesis, PI-PLC activity is present only in virulent listeria species. It may participate in the lysis of the phagolysosomal membrane. This Listeria monocytogenes serovar 1/2a (strain ATCC BAA-679 / EGD-e) protein is 1-phosphatidylinositol phosphodiesterase (plcA).